A 31-amino-acid polypeptide reads, in one-letter code: Cytochrome b6-f complex subunit 6 (31 aa).

The helical transmembrane segment at 4–24 (ITSYFGFLLAALTITSALLIG) threads the bilayer.

It belongs to the PetL family. The 4 large subunits of the cytochrome b6-f complex are cytochrome b6, subunit IV (17 kDa polypeptide, PetD), cytochrome f and the Rieske protein, while the 4 small subunits are PetG, PetL, PetM and PetN. The complex functions as a dimer.

The protein resides in the plastid. The protein localises to the chloroplast thylakoid membrane. Functionally, component of the cytochrome b6-f complex, which mediates electron transfer between photosystem II (PSII) and photosystem I (PSI), cyclic electron flow around PSI, and state transitions. PetL is important for photoautotrophic growth as well as for electron transfer efficiency and stability of the cytochrome b6-f complex. The chain is Cytochrome b6-f complex subunit 6 from Magnolia grandiflora (Southern magnolia).